The following is a 373-amino-acid chain: Glutamine synthetase (373 aa).

An N-acetylalanine modification is found at A2. The interval 2–25 (ATSASSHLNKGIKQVYMALPQGDK) is required for glutamine-induced ubiquitination by CRL4(CRBN) and proteasomal degradation. N6-acetyllysine occurs at positions 11 and 14. In terms of domain architecture, GS beta-grasp spans 26 to 106 (VQAMYIWIDG…VFCEVFKYNR (81 aa)). Position 104 is a phosphotyrosine (Y104). The 261-residue stretch at 113 to 373 (LRHTCKRIMD…TGDEPFQYKN (261 aa)) folds into the GS catalytic domain. E134 provides a ligand contact to ATP. Mn(2+)-binding residues include E134, E136, E196, and E203. 203–208 (EFQIGP) is an ATP binding site. L-glutamate is bound at residue 246–247 (NW). Residue H253 coordinates Mn(2+). ATP-binding positions include 255–257 (NFS), R319, and R324. R319 lines the L-glutamate pocket. 336-338 (YFE) contributes to the ADP binding site. E338 provides a ligand contact to Mn(2+). R340 provides a ligand contact to L-glutamate. A Phosphoserine modification is found at S343.

It belongs to the glutamine synthetase family. Decamer; composed of two pentamers. Interacts with PALMD. Interacts with RHOJ. Interacts with BEST2; this interaction tethers a fraction of GLUL to the membrane, causing a decrease of cytosolic glutamine synthase (GS) activity and inhibits the chloride channel activity of BEST2 by affecting the gating at the aperture in the absence of intracellular glutamate. Mg(2+) is required as a cofactor. Requires Mn(2+) as cofactor. Palmitoylated; undergoes autopalmitoylation. In terms of processing, acetylated by EP300/p300; acetylation is stimulated by increased glutamine levels and promotes ubiquitin-mediated proteasomal degradation. Post-translationally, ubiquitinated by ZNRF1. Ubiquitinated by the DCX (DDB1-CUL4-X-box) E3 ubiquitin-protein ligase complex called CRL4(CRBN), leading to proteasomal degradation.

It is found in the cytoplasm. The protein resides in the cytosol. The protein localises to the microsome. It localises to the mitochondrion. Its subcellular location is the cell membrane. The enzyme catalyses L-glutamate + NH4(+) + ATP = L-glutamine + ADP + phosphate + H(+). It catalyses the reaction L-cysteinyl-[protein] + hexadecanoyl-CoA = S-hexadecanoyl-L-cysteinyl-[protein] + CoA. With respect to regulation, glutamine synthetase activity is inhibited by methionine sulfoximine (MSO). Glutamine synthetase that catalyzes the ATP-dependent conversion of glutamate and ammonia to glutamine. Its role depends on tissue localization: in the brain, it regulates the levels of toxic ammonia and converts neurotoxic glutamate to harmless glutamine, whereas in the liver, it is one of the enzymes responsible for the removal of ammonia. Plays a key role in ammonium detoxification during erythropoiesis: the glutamine synthetase activity is required to remove ammonium generated by porphobilinogen deaminase (HMBS) during heme biosynthesis to prevent ammonium accumulation and oxidative stress. Essential for proliferation of fetal skin fibroblasts. Independently of its glutamine synthetase activity, required for endothelial cell migration during vascular development. Involved in angiogenesis by regulating membrane localization and activation of the GTPase RHOJ, possibly by promoting RHOJ palmitoylation. May act as a palmitoyltransferase for RHOJ: able to autopalmitoylate and then transfer the palmitoyl group to RHOJ. Plays a role in ribosomal 40S subunit biogenesis. Through the interaction with BEST2, inhibits BEST2 channel activity by affecting the gating at the aperture in the absence of intracellular L-glutamate, but sensitizes BEST2 to intracellular L-glutamate, which promotes the opening of BEST2 and thus relieves its inhibitory effect on BEST2. The sequence is that of Glutamine synthetase from Bos taurus (Bovine).